A 304-amino-acid chain; its full sequence is Iron(III) enterobactin esterase (304 aa).

The signal sequence occupies residues 1 to 25 (MRTSLLVAALGLALAAALPGGAPLA). Residues serine 182, glutamate 242, and histidine 283 each act as charge relay system in the active site.

This sequence belongs to the esterase D family. Monomer.

It is found in the periplasm. It carries out the reaction Fe(III)-enterobactin + 3 H2O + H(+) = Fe(III)-[N-(2,3-dihydroxybenzoyl)-L-serine] + 2 N-(2,3-dihydroxybenzoyl)-L-serine. The catalysed reaction is Fe(III)-enterobactin + H2O = Fe(III)-[N-(2,3-dihydroxybenzoyl)-L-serine]3 + H(+). The enzyme catalyses Fe(III)-[N-(2,3-dihydroxybenzoyl)-L-serine]3 + H2O + H(+) = Fe(III)-[N-(2,3-dihydroxybenzoyl)-L-serine]2 + N-(2,3-dihydroxybenzoyl)-L-serine. It catalyses the reaction Fe(III)-[N-(2,3-dihydroxybenzoyl)-L-serine]2 + H2O + H(+) = Fe(III)-[N-(2,3-dihydroxybenzoyl)-L-serine] + N-(2,3-dihydroxybenzoyl)-L-serine. In terms of biological role, catalyzes the hydrolysis of ferric enterobactin (Fe-Ent). Hydrolyzes Fe-Ent into three molecules of 2,3-dihydroxybenzoylserine (DHBS) still complexed with ferric iron. Iron reduction is necessary to obtain complete release of the metal from DHBS. It can hydrolyze salmochelin S4 (diglucosyl-C-Ent) but is not involved in iron acquisition by this siderophore. In Pseudomonas aeruginosa (strain ATCC 15692 / DSM 22644 / CIP 104116 / JCM 14847 / LMG 12228 / 1C / PRS 101 / PAO1), this protein is Iron(III) enterobactin esterase.